Consider the following 354-residue polypeptide: Guanine nucleotide-binding protein alpha-16 subunit (354 aa).

Glycine 2 carries N-myristoyl glycine lipidation. Cysteine 3 is lipidated: S-palmitoyl cysteine. In terms of domain architecture, G-alpha spans 31 to 354; that stretch reads KTVKLLLLGA…RDNLRTCGLY (324 aa). A G1 motif region spans residues 34-47; it reads KLLLLGAGESGKST. GTP is bound by residues 39 to 46, 174 to 180, 199 to 203, 268 to 271, and alanine 326; these read GAGESGKS, LRTRIKT, DVGGQ, and NKKD. Mg(2+) is bound by residues serine 46 and threonine 180. Positions 172–180 are G2 motif; sequence DVLRTRIKT. Residues 195–204 form a G3 motif region; it reads FVVFDVGGQR. The G4 motif stretch occupies residues 264 to 271; the sequence is ILFLNKKD. Residues 324–329 form a G5 motif region; the sequence is TCATDT.

This sequence belongs to the G-alpha family. As to quaternary structure, g proteins are composed of 3 units; alpha, beta and gamma. The alpha chain contains the guanine nucleotide binding site.

Guanine nucleotide-binding proteins (G proteins) are involved as modulators or transducers in various transmembrane signaling systems. In the 1-cell embryo, probably together with goa-1, controls nuclear rotation and spindle elongation during mitosis. During the first embryonic cell divisons, plays a role in gpr-1/2 cortical localization and in the proper orientation of EMS blastomere mitotic spindle. This chain is Guanine nucleotide-binding protein alpha-16 subunit (gpa-16), found in Caenorhabditis briggsae.